The primary structure comprises 522 residues: Protein disulfide-isomerase (522 aa).

The or 22 signal peptide spans 1–28 (MKFSAGAVLSWSSLLLASSVFAQQEAVA). Residues 29-141 (PEDSAVVKLA…VQFMIKQSQP (113 aa)) enclose the Thioredoxin 1 domain. Active-site nucleophile residues include Cys-61 and Cys-64. Cys-61 and Cys-64 are oxidised to a cystine. N-linked (GlcNAc...) asparagine glycosylation is found at Asn-82, Asn-117, Asn-155, and Asn-174. A Thioredoxin 2 domain is found at 356–485 (FLKGDASPIV…LFDFIKENGH (130 aa)). Catalysis depends on nucleophile residues Cys-406 and Cys-409. Residues Cys-406 and Cys-409 are joined by a disulfide bond. Residue Asn-425 is glycosylated (N-linked (GlcNAc...) asparagine). The tract at residues 497 to 522 (AQEKAAEEADADAELADEEDAIHDEL) is disordered. The segment covering 504 to 522 (EADADAELADEEDAIHDEL) has biased composition (acidic residues). The Prevents secretion from ER signature appears at 519–522 (HDEL).

The protein belongs to the protein disulfide isomerase family. In terms of assembly, interacts with EPS1, KAR2 and MNL1. In terms of processing, the N-terminus is blocked.

It is found in the endoplasmic reticulum lumen. The catalysed reaction is Catalyzes the rearrangement of -S-S- bonds in proteins.. Its function is as follows. Protein disulfide isomerase of ER lumen required for formation of disulfide bonds in secretory and cell-surface proteins and which unscrambles non-native disulfide bonds. Forms a complex with MNL1 to process unfolded protein-bound Man8GlcNAc2 oligosaccharides to Man7GlcNAc2, promoting degradation in unfolded protein response. In Saccharomyces cerevisiae (strain ATCC 204508 / S288c) (Baker's yeast), this protein is Protein disulfide-isomerase (PDI1).